A 460-amino-acid chain; its full sequence is Alpha-amylase (460 aa).

Positions M1–A21 are cleaved as a signal peptide. N121, Q167, and D176 together coordinate Ca(2+). Residue D206 is the Nucleophile of the active site. Residue H210 participates in Ca(2+) binding. E233 acts as the Proton donor in catalysis.

It belongs to the glycosyl hydrolase 13 family. In terms of assembly, monomer. Ca(2+) serves as cofactor.

The enzyme catalyses Endohydrolysis of (1-&gt;4)-alpha-D-glucosidic linkages in polysaccharides containing three or more (1-&gt;4)-alpha-linked D-glucose units.. This chain is Alpha-amylase (amy), found in Streptomyces thermoviolaceus.